Reading from the N-terminus, the 543-residue chain is EH domain-containing protein 2 (543 aa).

At S3 the chain carries Phosphoserine. Residues F55 to P286 form the Dynamin-type G domain. Positions G65–T72 are G1 motif. G65–T72 contacts ATP. A G2 motif region spans residues E91–P92. The KPF loop; caveolar targeting motif lies at K120–F122. Residues D153 to G156 are G3 motif. The interval N219–D222 is G4 motif. K220 is an ATP binding site. A region of interest (G5 motif) is located at residue V243. W258 contributes to the ATP binding site. Positions S320 to A340 are mediates membrane-binding. Phosphoserine occurs at positions 438, 468, 470, 484, and 493. The region spanning D449–R537 is the EH domain. The 36-residue stretch at L481–K516 folds into the EF-hand domain. D494, D496, D498, M500, and E505 together coordinate Ca(2+). Residues P523–E543 are disordered. Basic residues predominate over residues S534 to E543.

Belongs to the TRAFAC class dynamin-like GTPase superfamily. Dynamin/Fzo/YdjA family. EHD subfamily. In terms of assembly, homodimer and homooligomer. Interacts with EHD1. May also interact with EHD3 and EHD4. Interacts with MYOF. Interacts with EHBP1. Interacts with FER1L5 (via second C2 domain). Interacts with CAV1 in a cholesterol-dependent manner. Interacts (via EH domain) with PACSIN2 (via NPF motifs); this interaction probably stabilizes the caveolae. As to expression, highly expressed in heart and moderately expressed in placenta, lung, and skeletal muscle.

It is found in the cell membrane. The protein localises to the membrane. The protein resides in the caveola. It localises to the endosome membrane. Its subcellular location is the cytoplasm. It is found in the cytosol. Its activity is regulated as follows. The very low intrinsic ATPase activity is increased upon interaction with liposomes. ATP- and membrane-binding protein that controls membrane reorganization/tubulation upon ATP hydrolysis. Plays a role in membrane trafficking between the plasma membrane and endosomes. Important for the internalization of GLUT4. Required for fusion of myoblasts to skeletal muscle myotubes. Required for normal translocation of FER1L5 to the plasma membrane. Regulates the equilibrium between cell surface-associated and cell surface-dissociated caveolae by constraining caveolae at the cell membrane. In Homo sapiens (Human), this protein is EH domain-containing protein 2.